We begin with the raw amino-acid sequence, 158 residues long: uncharacterized protein (158 aa).

The first 30 residues, 1–30 (MNKKFLKCGTLFLISCSILGSTIPAVTVFS), serve as a signal peptide directing secretion.

This is an uncharacterized protein from Streptococcus pneumoniae serotype 2 (strain D39 / NCTC 7466).